The sequence spans 760 residues: Translocation protein SEC63 homolog (760 aa).

The Lumenal portion of the chain corresponds to 1–14; the sequence is MAGQQFQYDDSGNT. Residues 15-35 traverse the membrane as a helical segment; that stretch reads FFYFLTSFVGLIVIPATYYLW. Residues 36–69 lie on the Cytoplasmic side of the membrane; it reads PRDQNAEQIRLKNIRKVYGRCMWYRLRLLKPQPN. Residues 70-90 form a helical membrane-spanning segment; it reads IIPTVKKIVLLAGWALFLFLA. The Lumenal segment spans residues 91–188; sequence YKVSKTDREY…LPAWIVDQKN (98 aa). Positions 104 to 165 constitute a J domain; sequence NPYEVLNLDP…ESRKNWEEFG (62 aa). Residues 189–209 form a helical membrane-spanning segment; that stretch reads SILVLLVYGLAFMVILPVVVG. In terms of domain architecture, SEC63 1 spans 197 to 541; sequence GLAFMVILPV…LKKKPTPVLL (345 aa). The Cytoplasmic portion of the chain corresponds to 210–760; the sequence is SWWYRSIRYS…EEEEEEEDDD (551 aa). A disordered region spans residues 492–617; it reads AEEQPAEDGQ…DDEAEWQELQ (126 aa). Basic residues predominate over residues 518-536; it reads KGPKKTAKSKKKKPLKKKP. A Phosphothreonine modification is found at Thr537. The span at 582–608 shows a compositional bias: basic and acidic residues; sequence NRDSQSEKDDGSDRDSDREQDEKQNKD. A coiled-coil region spans residues 597-635; that stretch reads SDREQDEKQNKDDEAEWQELQQSIQRKERALLETKSKIT. An SEC63 2 domain is found at 637–714; that stretch reads PVYSLYFPEE…GLDQIKPLKL (78 aa). A disordered region spans residues 720–760; sequence KPVPENHPQWDTAIEGDEDQEDSEGFEDSFEEEEEEEEDDD. Positions 733–760 are enriched in acidic residues; it reads IEGDEDQEDSEGFEDSFEEEEEEEEDDD. 2 positions are modified to phosphoserine: Ser742 and Ser748.

As to quaternary structure, the ER translocon complex consists of channel-forming core components SEC61A1, SEC61B and SEC61G and different auxiliary components such as SEC62 and SEC63. Widely expressed, with high levels in the liver.

The protein resides in the endoplasmic reticulum membrane. In terms of biological role, mediates cotranslational and post-translational transport of certain precursor polypeptides across endoplasmic reticulum (ER). Proposed to play an auxiliary role in recognition of precursors with short and apolar signal peptides. May cooperate with SEC62 and HSPA5/BiP to facilitate targeting of small presecretory proteins into the SEC61 channel-forming translocon complex, triggering channel opening for polypeptide translocation to the ER lumen. Required for efficient PKD1/Polycystin-1 biogenesis and trafficking to the plasma membrane of the primary cilia. The polypeptide is Translocation protein SEC63 homolog (Homo sapiens (Human)).